Here is a 101-residue protein sequence, read N- to C-terminus: Small ribosomal subunit protein uS14 (101 aa).

This sequence belongs to the universal ribosomal protein uS14 family. In terms of assembly, part of the 30S ribosomal subunit. Contacts proteins S3 and S10.

Binds 16S rRNA, required for the assembly of 30S particles and may also be responsible for determining the conformation of the 16S rRNA at the A site. This Cupriavidus necator (strain ATCC 17699 / DSM 428 / KCTC 22496 / NCIMB 10442 / H16 / Stanier 337) (Ralstonia eutropha) protein is Small ribosomal subunit protein uS14.